The sequence spans 630 residues: GATA-type transcription factor SRE1 (630 aa).

Disordered stretches follow at residues 1–139 and 162–203; these read MTGL…TPLW and DRPT…RLTD. Composition is skewed to polar residues over residues 66-82, 115-133, and 175-196; these read DNTQ…QLQN, KAQS…NCGT, and YGSS…TNDG. Residues 128–152 form a GATA-type 1 zinc finger; the sequence is CSNCGTKRTPLWRRSPTGATICNAC. Residues 219–237 form a cystein-rich region (CRR) region; it reads CPGGGSCNGTGGAEGCDGC. Residues 256–283 form a disordered region; it reads HTPRTSPQVSTQGGPGSTEGDAGSSNPE. A compositionally biased stretch (polar residues) spans 258 to 267; sequence PRTSPQVSTQ. The segment at 291–315 adopts a GATA-type 2 zinc-finger fold; the sequence is CQNCQTTVTPLWRRDENGHPICNAC. Positions 339-609 are disordered; it reads KRVVPAMREQ…AKAERRARLQ (271 aa). A compositionally biased stretch (polar residues) spans 349–363; it reads SPPSATQSSNGSVSP. Low complexity-rich tracts occupy residues 436–447 and 492–503; these read NNHNNGETTNTH and SSSSASFPNNNP. A compositionally biased stretch (polar residues) spans 504 to 513; the sequence is GRFNSISSLL. The segment covering 558–568 has biased composition (low complexity); it reads SHSPPRFSPSL. Residues 595–609 are compositionally biased toward basic and acidic residues; the sequence is VDHRDAKAERRARLQ. A coiled-coil region spans residues 595 to 630; that stretch reads VDHRDAKAERRARLQREAQDMREALKAKERELALLE.

It localises to the nucleus. Functionally, GATA-type transcription repressor that regulates iron- acquisition genes through specific binding the GATA sequence element 5'-(G/A)ATC(T/A)GATAA-3' of target promoters in an iron- and zinc-dependent manner. Regulation occurs via direct binding of iron ions. Iron acquisition regulation is critical for survival under both iron-limiting conditions (to acquire essential iron) and iron-replete conditions (to limit iron toxicity). SRE1 targets include genes encoding a number of key iron-regulated factors such as those involved in siderophore biosynthesis, presumed ferric reductase activity, iron-responsive transcriptional regulation, oxidative stress response, as well as genes encoding a number of putative oxidoreductases, metabolic and mitochondrial enzymes, superoxide dismutase, and genes previously identified as induced during nitrosative stress. This chain is GATA-type transcription factor SRE1, found in Ajellomyces capsulatus (Darling's disease fungus).